We begin with the raw amino-acid sequence, 497 residues long: RNA polymerase sigma factor SigA (497 aa).

Disordered stretches follow at residues M1–S20 and K62–L86. The span at T63 to P73 shows a compositional bias: basic and acidic residues. Residues K74 to A84 show a composition bias toward basic residues. Residues L250–T320 form a sigma-70 factor domain-2 region. The short motif at D274 to Q277 is the Interaction with polymerase core subunit RpoC element. The tract at residues E329–F410 is sigma-70 factor domain-3. Residues L423–H478 form a sigma-70 factor domain-4 region. Residues L451–N470 constitute a DNA-binding region (H-T-H motif).

Belongs to the sigma-70 factor family. RpoD/SigA subfamily. As to quaternary structure, interacts transiently with the RNA polymerase catalytic core.

Its subcellular location is the cytoplasm. In terms of biological role, sigma factors are initiation factors that promote the attachment of RNA polymerase to specific initiation sites and are then released. This sigma factor is the primary sigma factor during exponential growth. This Mycoplasma genitalium (strain ATCC 33530 / DSM 19775 / NCTC 10195 / G37) (Mycoplasmoides genitalium) protein is RNA polymerase sigma factor SigA.